The primary structure comprises 296 residues: Methylsterol monooxygenase 1 (296 aa).

Helical transmembrane passes span 55–75 and 100–120; these read LLVHEASYFLLCVPGFIFQFI and TLIFNHFFIQLPLICGTYYFT. Residues 145–274 enclose the Fatty acid hydroxylase domain; the sequence is CAVIEDAWHY…FTWWDRIFGT (130 aa). Positions 157 to 161 match the Histidine box-1 motif; it reads HRLLH. Positions 170 to 174 match the Histidine box-2 motif; that stretch reads HKVHH. The helical transmembrane segment at 199–219 threads the bilayer; sequence FFIGIVVFCNHVVLLWAWVIC. A Histidine box-3 motif is present at residues 249–255; it reads FHDFHHM.

Belongs to the sterol desaturase family. Fe cation serves as cofactor.

It is found in the endoplasmic reticulum membrane. The catalysed reaction is 4,4-dimethyl-5alpha-cholest-7-en-3beta-ol + 6 Fe(II)-[cytochrome b5] + 3 O2 + 5 H(+) = 4alpha-carboxy-4beta-methyl-5alpha-cholest-7-ene-3beta-ol + 6 Fe(III)-[cytochrome b5] + 4 H2O. The protein operates within steroid biosynthesis; zymosterol biosynthesis; zymosterol from lanosterol: step 3/6. Catalyzes the first step in the removal of the two C-4 methyl groups of 4,4-dimethylzymosterol. This Gallus gallus (Chicken) protein is Methylsterol monooxygenase 1 (MSMO1).